A 674-amino-acid chain; its full sequence is Ribonuclease E (674 aa).

The region spanning 35–117 is the S1 motif domain; the sequence is GDIYLGLVDN…LTGNISMPGR (83 aa). Mg(2+) contacts are provided by Asp-296 and Asp-339. Zn(2+) is bound by residues Cys-397 and Cys-400. Disordered regions lie at residues 458–529 and 626–674; these read PLDL…RRVE and QPRE…SSAE. 2 stretches are compositionally biased toward basic and acidic residues: residues 484 to 493 and 509 to 529; these read GSEFSEKENI and TKEKVTGTAPPRRERPSRRVE. The segment covering 663–674 has biased composition (basic residues); it reads RPGRRRRRSSAE. The C4 Arg-rich motif, probably responsible for interaction with PNPase motif lies at 665–673; sequence GRRRRRSSA.

This sequence belongs to the RNase E/G family. As to quaternary structure, fractionates in a 250-300 kDa region, which is too small to be the equivalent of an RNA degradosome, as occurs with E.coli RNase E. Interacts with polynucleotide phosphorylase (PNPase, pnp), probably via the C4 Arg-rich motif (residues 665-673). It depends on Mg(2+) as a cofactor.

The protein localises to the cytoplasm. The protein resides in the cell inner membrane. It catalyses the reaction Endonucleolytic cleavage of single-stranded RNA in A- and U-rich regions.. Functionally, endoribonuclease that plays a central role in rRNA processing and mRNA decay, and probably tRNA processing. Acts on 9S rRNA (the precursor of 5S rRNA) and RNAI, a molecule that controls the replication of ColE1 plasmid. Upon expression in E.coli does not purify with endogenous degradosome proteins. Prefers 5'-monophosphorylated substrates over 5'-triphosphorylated substrates. Complements an rne temperature-sensitive mutation in E.coli, despite being considerably shorter and not able to interact with the E.coli degradosome. Cleaves AU-rich sequences in vitro, tested with psbA2 mRNA. Complements both an rne temperature-sensitive mutation and an rng deletion in E.coli. Acts in the degradation of psaL mRNA in the presence but not the absence of the sRNA PsrR1. Cleaves the rimO-crhR transcript, contributing to the very short half-life of rimO mRNA. Its function is as follows. mRNA for psbA2, one of the core proteins in photosystem II, is degraded in the dark under control of a cis-acting AU-rich box in its 5'-UTR. RNase E cuts in this box, suggesting it is involved in this dark-induced mRNA instability. In terms of biological role, CRISPR (clustered regularly interspaced short palindromic repeat) is an adaptive immune system that provides protection against mobile genetic elements (viruses, transposable elements and conjugative plasmids). CRISPR clusters contain spacers, sequences complementary to antecedent mobile elements, and target invading nucleic acids. CRISPR clusters are transcribed and processed into CRISPR RNA (crRNA). Endogenous RNase E is required for correct processing of pre-crRNA for the CRISPR3 subtype III-B system in this genome (genes sll7080 to sll7095). This CRISPR3 system does not include a cas6 gene, which is the usual RNase involved in crRNA maturation. This is Ribonuclease E from Synechocystis sp. (strain ATCC 27184 / PCC 6803 / Kazusa).